The following is a 159-amino-acid chain: Transcription elongation factor A protein-like 1 (159 aa).

Residues 1–97 (MDKPRKENEE…PPCGVGKHKL (97 aa)) form a disordered region. Residues 17 to 34 (KTDEERPPVEHSPEKQSP) show a composition bias toward basic and acidic residues. 6 positions are modified to phosphoserine: Ser-28, Ser-33, Ser-38, Ser-39, Ser-43, and Ser-44. The segment covering 37-54 (QSSEEQSSEEEFFPEELL) has biased composition (acidic residues). Positions 64 to 80 (SEERPPQEGLSRKDLFE) are enriched in basic and acidic residues.

This sequence belongs to the TFS-II family. TFA subfamily. In terms of processing, phosphorylation of Ser-38 and Ser-39 is critical for transcriptional repression. Expressed in all tissues examined. Highly expressed in heart, ovary, prostate and skeletal muscle. Moderately expressed in brain, placenta, testis and small intestine. Weakly expressed in lung, liver and spleen. Expressed in several cancer cell lines.

Its subcellular location is the nucleus. May be involved in transcriptional regulation. Modulates various viral and cellular promoters in a promoter context-dependent manner. For example, transcription from the FOS promoter is increased, while Rous sarcoma virus (RSV) long terminal repeat (LTR) promoter activity is repressed. Does not bind DNA directly. The protein is Transcription elongation factor A protein-like 1 of Homo sapiens (Human).